A 106-amino-acid chain; its full sequence is NADH dehydrogenase [ubiquinone] iron-sulfur protein 5 (106 aa).

The region spanning Ala-30 to Arg-74 is the CHCH domain. 2 short sequence motifs (cx9C motif) span residues Cys-33–Cys-43 and Cys-56–Cys-66. Disulfide bonds link Cys-33–Cys-66 and Cys-43–Cys-56. The disordered stretch occupies residues Asp-84–Pro-106.

This sequence belongs to the complex I NDUFS5 subunit family. Mammalian complex I is composed of 45 different subunits. This is a component of the iron-sulfur (IP) fragment of the enzyme.

It localises to the mitochondrion inner membrane. The protein resides in the mitochondrion intermembrane space. Functionally, accessory subunit of the mitochondrial membrane respiratory chain NADH dehydrogenase (Complex I), that is believed not to be involved in catalysis. Complex I functions in the transfer of electrons from NADH to the respiratory chain. The immediate electron acceptor for the enzyme is believed to be ubiquinone. This chain is NADH dehydrogenase [ubiquinone] iron-sulfur protein 5 (NDUFS5), found in Homo sapiens (Human).